We begin with the raw amino-acid sequence, 476 residues long: NAD(+) hydrolase ThsA (476 aa).

In terms of domain architecture, Deacetylase sirtuin-type spans 4–283 (NPIVELFIKD…QRIENNIKTK (280 aa)). NAD(+) is bound by residues alanine 23, aspartate 114, and histidine 152. Histidine 152 functions as the Proton acceptor in the catalytic mechanism. The SLOG (STALD) domain, binds 3'cADPR stretch occupies residues 284 to 476 (TVFLSGSAVE…IIEFVEILSN (193 aa)). 3'cADPR-binding residues include glycine 289, serine 290, leucine 326, phenylalanine 357, arginine 371, lysine 388, glycine 399, and glutamate 403.

The protein belongs to the soluble Thoeris ThsA family. As to quaternary structure, homotetramer formed by dimer of dimers; homooctamers are occasionally seen. Not seen to interact with ThsB. In the absence of the signal generated by ThsB, 63% monomer and 20% homotetramer; in the presence of the ThsB signal product 40% of the protein is dimeric. Homotetramer in solution; probably dimerizes via the N-terminal sirtuin-like domain.

It localises to the cytoplasm. It carries out the reaction NAD(+) + H2O = ADP-D-ribose + nicotinamide + H(+). Its activity is regulated as follows. Activated by a molecule generated by endogenous ThsB (AC J8G8J6) or ThsB' (AC J8CSK2); activation in vitro is 50-100x more sensitive to 3' cyclic ADP-D-ribose (3'cADPR) than 2'cADPR. 3'cADPR activates the NADase function of ThsA by binding to the SLOG domain, which changes its tetramer organization, allowing NAD to access the active site. Also activated by a signal molecule generated by B.dafuensis TIR1 (AC A0A5B8Z670) and TIR2 (AC A0A5B8Z260), and by BdTIR (AC I1GTC2), a plant protein involved in defense against bacterial infection. The signal produced by BdTIR is probably 2'cADPR, which activates this protein, the signal produced by endogenous ThsB' is probably 3'cADPR. Its function is as follows. NAD(+) hydrolyzing component (NADase) of the Thoeris antiviral defense system, composed of ThsA and ThsB. Activated by a signal molecule generated by endogenous ThsB (AC J8G8J6) or ThsB' (AC J8CSK2, probably 3'cADPR), by TIR1 and TIR2 from B.dafuensis or by BdTIR from B.distachyon (AC I1GTC2, probably 2'cADPR). Upon activation binds and hydrolyzes NAD(+), leading to cell death and inhibition of phage replication. Not seen to bind DNA. Activation is 50-100x more sensitive to 3' cyclic ADP-D-ribose (3'cADPR) than 2'cADPR. In another paper ThsA is not activated by any tested cADPR isomer, although it binds 3'cADPR; it was suggested the protein is already in a fully active state. Expression of ThsA and ThsB in B.subtilis (strain BEST7003) confers resistance to phages phi29, SBSphiC, SBSphiJ and SPO1. At multiplicity of infection (MOI) of 0.05 Thoeris-encoding cultures grow normally when infected with SPO1, at MOI 5 cultures collapse prematurely by 90 minutes post-infection, thus the phage are not able to complete a replication cycle. NAD(+) levels fall and ADP-D-ribose levels rise 60 minutes post-infection. Thoeris cultures eventually recover, but retain the same susceptibility to SPO1. The polypeptide is NAD(+) hydrolase ThsA (Bacillus cereus (strain MSX-D12)).